Here is an 89-residue protein sequence, read N- to C-terminus: Small ribosomal subunit protein uS15 (89 aa).

It belongs to the universal ribosomal protein uS15 family. Part of the 30S ribosomal subunit. Forms a bridge to the 50S subunit in the 70S ribosome, contacting the 23S rRNA.

One of the primary rRNA binding proteins, it binds directly to 16S rRNA where it helps nucleate assembly of the platform of the 30S subunit by binding and bridging several RNA helices of the 16S rRNA. In terms of biological role, forms an intersubunit bridge (bridge B4) with the 23S rRNA of the 50S subunit in the ribosome. This Bacteroides thetaiotaomicron (strain ATCC 29148 / DSM 2079 / JCM 5827 / CCUG 10774 / NCTC 10582 / VPI-5482 / E50) protein is Small ribosomal subunit protein uS15.